We begin with the raw amino-acid sequence, 1130 residues long: Sodium/potassium/calcium exchanger 1 (1130 aa).

The Extracellular portion of the chain corresponds to 1–419 (MGKLIRMGTQ…DLFSVEDRRQ (419 aa)). Residues 104-209 (PSIAMEDTPN…SPTATVRDRE (106 aa)) form a disordered region. The segment covering 125–136 (LKNSYSPTTAGT) has biased composition (polar residues). Positions 170–187 (PRGERKNSSPTHAREKGR) are enriched in basic and acidic residues. N-linked (GlcNAc...) asparagine glycosylation is found at Asn-176 and Asn-273. The interval 274–295 (ISTTPQGAVPQHTPATSEEQMT) is disordered. The segment covering 286-295 (TPATSEEQMT) has biased composition (polar residues). A helical membrane pass occupies residues 420-440 (GWVVLHIFGMMYVFVALAIVC). Residues 441 to 464 (DEYFVPALGVITHKLQISEDVAGA) lie on the Cytoplasmic side of the membrane. One copy of the Alpha-1 repeat lies at 461-501 (VAGATFMAAGGSAPELFTSLIGVFISHSNVGIGTIVGSAVF). The chain crosses the membrane as a helical span at residues 465-485 (TFMAAGGSAPELFTSLIGVFI). Residues 486 to 489 (SHSN) are Extracellular-facing. Residues 490–510 (VGIGTIVGSAVFNILFVIGTC) form a helical membrane-spanning segment. Topologically, residues 511-530 (ALFSREILNLTWWPLFRDVS) are cytoplasmic. A helical membrane pass occupies residues 531-551 (FYILDLSMLIVFFLDSFIAWW). Glu-552 is a topological domain (extracellular). The chain crosses the membrane as a helical span at residues 553–573 (SLLLLLAYALYVFTMKWNKQI). At 574–938 (ELWVKEQLSR…SLEWPDSRQK (365 aa)) the chain is on the cytoplasmic side. A disordered region spans residues 598 to 619 (PSEDAVEENEQQDSKKLKLPSV). Ser-625 carries the post-translational modification Phosphoserine. The disordered stretch occupies residues 650–932 (GEARPSKDKQ…ENEEPLSLEW (283 aa)). The span at 661–675 (SLNQEARVLSQTKAE) shows a compositional bias: polar residues. Thr-690 bears the Phosphothreonine mark. Residues 703 to 715 (QEDDPGCQEDVDE) are compositionally biased toward acidic residues. A compositionally biased stretch (basic and acidic residues) spans 730–751 (ETETEGKKDEQEGETEAERKED). Acidic residues-rich tracts occupy residues 766-782 (GETE…GETE) and 802-820 (QEGE…GETE). Positions 833–855 (AESKEVEQERETEAEGKDKHEGQ) are enriched in basic and acidic residues. Acidic residues-rich tracts occupy residues 870–880 (GETEANAEDQC) and 896–928 (DGGD…EEPL). A helical transmembrane segment spans residues 939–959 (QAIYLFLLPIVFPLWLTIPDV). The Extracellular portion of the chain corresponds to 960-966 (RRQESRK). Residues 967 to 987 (FFVITFLGSIIWIAMFSYLMV) traverse the membrane as a helical segment. Over 988 to 1002 (WWAHQVGETIGISEE) the chain is Cytoplasmic. A helical transmembrane segment spans residues 1003–1023 (IMGLTILAAGTSIPDLITSVI). The stretch at 1010–1041 (AAGTSIPDLITSVIVARKGLGDMAVSSSVGSN) is one Alpha-2 repeat. Residues 1024 to 1041 (VARKGLGDMAVSSSVGSN) lie on the Extracellular side of the membrane. Residues 1042–1062 (IFDITVGLPVPWLLFSLINAL) form a helical membrane-spanning segment. Over 1063–1070 (QPVPVSSN) the chain is Cytoplasmic. A helical membrane pass occupies residues 1071–1091 (GLFCAIVLLFLMLLFVIFSIA). At 1092–1099 (SCKWRMNK) the chain is on the extracellular side. The helical transmembrane segment at 1100 to 1120 (ILGFTMFLLYFVFLVISVMLE) threads the bilayer. Residues 1121–1130 (DRIISCPVSV) lie on the Cytoplasmic side of the membrane.

Belongs to the Ca(2+):cation antiporter (CaCA) (TC 2.A.19) family. SLC24A subfamily. In terms of processing, the uncleaved signal sequence is required for efficient membrane targeting and proper membrane integration and topology.

The protein resides in the cell membrane. It carries out the reaction Ca(2+)(out) + K(+)(out) + 4 Na(+)(in) = Ca(2+)(in) + K(+)(in) + 4 Na(+)(out). Its function is as follows. Calcium, potassium:sodium antiporter that transports 1 Ca(2+) and 1 K(+) in exchange for 4 Na(+). Critical component of the visual transduction cascade, controlling the calcium concentration of outer segments during light and darkness. Light causes a rapid lowering of cytosolic free calcium in the outer segment of both retinal rod and cone photoreceptors and the light-induced lowering of calcium is caused by extrusion via this protein which plays a key role in the process of light adaptation. The protein is Sodium/potassium/calcium exchanger 1 of Mus musculus (Mouse).